We begin with the raw amino-acid sequence, 461 residues long: Cysteine--tRNA ligase (461 aa).

Cys-28 is a Zn(2+) binding site. Positions 30-40 (ITVYDLCHIGH) match the 'HIGH' region motif. Residues Cys-209, His-234, and Glu-238 each contribute to the Zn(2+) site. Residues 266 to 270 (KMSKS) carry the 'KMSKS' region motif. Lys-269 serves as a coordination point for ATP.

This sequence belongs to the class-I aminoacyl-tRNA synthetase family. In terms of assembly, monomer. It depends on Zn(2+) as a cofactor.

The protein resides in the cytoplasm. It catalyses the reaction tRNA(Cys) + L-cysteine + ATP = L-cysteinyl-tRNA(Cys) + AMP + diphosphate. The protein is Cysteine--tRNA ligase of Klebsiella pneumoniae (strain 342).